Consider the following 472-residue polypeptide: MTVETFKPKQTTTLDIPVKTLEAASTNAVTTGNRIGFVSLGCPKNLVDSERILTQLRIDGYEVTNSYDNADLVIVNTCGFIDAAVEESLDAVREALEENGKVIVTGCLGAKENQIREVHPDVLEITGPHSYEAVLKHVHKYVPKPEHNPFTSLIPQTGVKLTPKHYAYLKISEGCDNRCTFCIIPSLRGDLDSRPAGSILDEAKRLVESGVQEILVVSQDTSAYGKDKGGRTDFWNGMPVKQDITSLARQLGKMGAWVRLHYIYPYPWVDDLIPLMAEGLILPYLDIPMQHASPRILKMMKRPGRVDRQLEAIQRWREICPDLVIRSTFIVGFPGETEEDFQILLDFLKEARLDRVGCFKYSEVDGAVANTIAELISEDVKEDRYHRFMEVQAEISAERLARFVGRTLDILIDDVDEEGAIGRSFADAPEIDGMVFINGETELEPGMLVRARITHSDEHDLWAEVVDADTQD.

Residues 33 to 143 (NRIGFVSLGC…VLKHVHKYVP (111 aa)) enclose the MTTase N-terminal domain. 6 residues coordinate [4Fe-4S] cluster: Cys42, Cys78, Cys107, Cys175, Cys179, and Cys182. Residues 161–398 (LTPKHYAYLK…MEVQAEISAE (238 aa)) enclose the Radical SAM core domain. Positions 401-467 (ARFVGRTLDI…EHDLWAEVVD (67 aa)) constitute a TRAM domain.

This sequence belongs to the methylthiotransferase family. RimO subfamily. Requires [4Fe-4S] cluster as cofactor.

It is found in the cytoplasm. The enzyme catalyses L-aspartate(89)-[ribosomal protein uS12]-hydrogen + (sulfur carrier)-SH + AH2 + 2 S-adenosyl-L-methionine = 3-methylsulfanyl-L-aspartate(89)-[ribosomal protein uS12]-hydrogen + (sulfur carrier)-H + 5'-deoxyadenosine + L-methionine + A + S-adenosyl-L-homocysteine + 2 H(+). Catalyzes the methylthiolation of an aspartic acid residue of ribosomal protein uS12. This Shewanella baltica (strain OS185) protein is Ribosomal protein uS12 methylthiotransferase RimO.